The primary structure comprises 212 residues: Uracil phosphoribosyltransferase (212 aa).

5-phospho-alpha-D-ribose 1-diphosphate is bound by residues arginine 78, arginine 103, and 130-138 (DPMLATGGS). Uracil-binding positions include isoleucine 193 and 198-200 (GDA). 5-phospho-alpha-D-ribose 1-diphosphate is bound at residue aspartate 199.

It belongs to the UPRTase family. Mg(2+) serves as cofactor.

It catalyses the reaction UMP + diphosphate = 5-phospho-alpha-D-ribose 1-diphosphate + uracil. It participates in pyrimidine metabolism; UMP biosynthesis via salvage pathway; UMP from uracil: step 1/1. With respect to regulation, allosterically activated by GTP. Functionally, catalyzes the conversion of uracil and 5-phospho-alpha-D-ribose 1-diphosphate (PRPP) to UMP and diphosphate. In Bordetella avium (strain 197N), this protein is Uracil phosphoribosyltransferase.